The primary structure comprises 193 residues: dCTP deaminase (193 aa).

Residues 110–115 (RSSLAR), D128, 136–138 (VLE), Y171, K178, and Q182 each bind dCTP. The active-site Proton donor/acceptor is the E138.

Belongs to the dCTP deaminase family. In terms of assembly, homotrimer.

It carries out the reaction dCTP + H2O + H(+) = dUTP + NH4(+). It participates in pyrimidine metabolism; dUMP biosynthesis; dUMP from dCTP (dUTP route): step 1/2. In terms of biological role, catalyzes the deamination of dCTP to dUTP. The polypeptide is dCTP deaminase (Tolumonas auensis (strain DSM 9187 / NBRC 110442 / TA 4)).